Here is a 215-residue protein sequence, read N- to C-terminus: Octanoyltransferase (215 aa).

In terms of domain architecture, BPL/LPL catalytic spans 35–210 (PDTPDQLWVV…HCLEAIVEYG (176 aa)). Substrate is bound by residues 74–81 (RGGQVTYH), 141–143 (SVG), and 154–156 (GLA). Cys-172 serves as the catalytic Acyl-thioester intermediate.

It belongs to the LipB family.

It is found in the cytoplasm. It catalyses the reaction octanoyl-[ACP] + L-lysyl-[protein] = N(6)-octanoyl-L-lysyl-[protein] + holo-[ACP] + H(+). It functions in the pathway protein modification; protein lipoylation via endogenous pathway; protein N(6)-(lipoyl)lysine from octanoyl-[acyl-carrier-protein]: step 1/2. Its function is as follows. Catalyzes the transfer of endogenously produced octanoic acid from octanoyl-acyl-carrier-protein onto the lipoyl domains of lipoate-dependent enzymes. Lipoyl-ACP can also act as a substrate although octanoyl-ACP is likely to be the physiological substrate. The chain is Octanoyltransferase from Alkalilimnicola ehrlichii (strain ATCC BAA-1101 / DSM 17681 / MLHE-1).